Reading from the N-terminus, the 116-residue chain is Prefoldin subunit beta (116 aa).

This sequence belongs to the prefoldin subunit beta family. Heterohexamer of two alpha and four beta subunits.

It localises to the cytoplasm. Functionally, molecular chaperone capable of stabilizing a range of proteins. Seems to fulfill an ATP-independent, HSP70-like function in archaeal de novo protein folding. This chain is Prefoldin subunit beta, found in Thermococcus onnurineus (strain NA1).